The sequence spans 307 residues: Acetyl-coenzyme A carboxylase carboxyl transferase subunit beta (307 aa).

Residues 1–21 form a disordered region; it reads MAMADQRNDKPGRPAAQRERR. Positions 43–307 constitute a CoA carboxyltransferase N-terminal domain; sequence LWVKCPETGE…MGRERLSPAA (265 aa).

It belongs to the AccD/PCCB family. As to quaternary structure, acetyl-CoA carboxylase is a heterohexamer composed of biotin carboxyl carrier protein (AccB), biotin carboxylase (AccC) and two subunits each of ACCase subunit alpha (AccA) and ACCase subunit beta (AccD).

It localises to the cytoplasm. The catalysed reaction is N(6)-carboxybiotinyl-L-lysyl-[protein] + acetyl-CoA = N(6)-biotinyl-L-lysyl-[protein] + malonyl-CoA. The protein operates within lipid metabolism; malonyl-CoA biosynthesis; malonyl-CoA from acetyl-CoA: step 1/1. Component of the acetyl coenzyme A carboxylase (ACC) complex. Biotin carboxylase (BC) catalyzes the carboxylation of biotin on its carrier protein (BCCP) and then the CO(2) group is transferred by the transcarboxylase to acetyl-CoA to form malonyl-CoA. This is Acetyl-coenzyme A carboxylase carboxyl transferase subunit beta from Phenylobacterium zucineum (strain HLK1).